Here is a 590-residue protein sequence, read N- to C-terminus: Aspartate--tRNA(Asp/Asn) ligase (590 aa).

Residue glutamate 175 coordinates L-aspartate. The aspartate stretch occupies residues 199–202 (QQYK). Residues arginine 221 and histidine 450 each contribute to the L-aspartate site. Residue 221–223 (RDE) coordinates ATP. An ATP-binding site is contributed by glutamate 484. An L-aspartate-binding site is contributed by arginine 491. 536–539 (GVDR) contacts ATP.

It belongs to the class-II aminoacyl-tRNA synthetase family. Type 1 subfamily. As to quaternary structure, homodimer.

It is found in the cytoplasm. It catalyses the reaction tRNA(Asx) + L-aspartate + ATP = L-aspartyl-tRNA(Asx) + AMP + diphosphate. In terms of biological role, aspartyl-tRNA synthetase with relaxed tRNA specificity since it is able to aspartylate not only its cognate tRNA(Asp) but also tRNA(Asn). Reaction proceeds in two steps: L-aspartate is first activated by ATP to form Asp-AMP and then transferred to the acceptor end of tRNA(Asp/Asn). In Nitrobacter hamburgensis (strain DSM 10229 / NCIMB 13809 / X14), this protein is Aspartate--tRNA(Asp/Asn) ligase.